The chain runs to 502 residues: ATP synthase subunit alpha (502 aa).

169-176 provides a ligand contact to ATP; the sequence is GDRQTGKT.

It belongs to the ATPase alpha/beta chains family. In terms of assembly, F-type ATPases have 2 components, CF(1) - the catalytic core - and CF(0) - the membrane proton channel. CF(1) has five subunits: alpha(3), beta(3), gamma(1), delta(1), epsilon(1). CF(0) has three main subunits: a(1), b(2) and c(9-12). The alpha and beta chains form an alternating ring which encloses part of the gamma chain. CF(1) is attached to CF(0) by a central stalk formed by the gamma and epsilon chains, while a peripheral stalk is formed by the delta and b chains.

The protein resides in the cell membrane. It catalyses the reaction ATP + H2O + 4 H(+)(in) = ADP + phosphate + 5 H(+)(out). Its function is as follows. Produces ATP from ADP in the presence of a proton gradient across the membrane. The alpha chain is a regulatory subunit. The sequence is that of ATP synthase subunit alpha from Priestia megaterium (strain ATCC 12872 / QMB1551) (Bacillus megaterium).